Consider the following 655-residue polypeptide: MAAGVAAWLPFARAAAIGWMPVANCPMPLAPADKNKRQDELIVLNVSGRRFQTWRTTLERYPDTLLGSTEKEFFFNEDTKEYFFDRDPEVFRCVLNFYRTGKLHYPRYECISAYDDELAFYGILPEIIGDCCYEEYKDRKRENAERLMDDNESENNQESMPSLSFRQTMWRAFENPHTSTLALVFYYVTGFFIAVSVITNVVETVPCGTVPGSKELPCGERYSVAFFCLDTACVMIFTVEYLLRLFAAPSRYRFIRSVMSIIDVVAIMPYYIGLVMTNNEDVSGAFVTLRVFRVFRIFKFSRHSQGLRILGYTLKSCASELGFLLFSLTMAIIIFATVMFYAEKGSSASKFTSIPASFWYTIVTMTTLGYGDMVPKTIAGKIFGSICSLSGVLVIALPVPVIVSNFSRIYHQNQRADKRRAQKKARLARIRVAKTGSSNAYLHSKRNGLLNEALELTGTPEEEHMGKTTSLIESQHHHLLHCLEKTTGLSYLVDDPLLSVRTSTIKNHEFIDEQMFEQNCMESSMQNYPSTRSPSLSSHSGLTTTCCSRRSKKTTHLPNSNLPATRLRSMQELSTIHIQGSEQPSLTTSRSSLNLKADDGLRPNCKTSQITTAIISIPTPPALTPEGESRPPPASPGPNTNIPSITSNVVKVSVL.

Over 1 to 182 (MAAGVAAWLP…FENPHTSTLA (182 aa)) the chain is Cytoplasmic. Interaction with KCNIP1 stretches follow at residues 6-21 (AAWL…GWMP) and 70-78 (EKEFFFNED). Residues His104, Cys110, Cys131, and Cys132 each contribute to the Zn(2+) site. Ser153 carries the post-translational modification Phosphoserine. The helical transmembrane segment at 183–204 (LVFYYVTGFFIAVSVITNVVET) threads the bilayer. Residues 205–223 (VPCGTVPGSKELPCGERYS) lie on the Extracellular side of the membrane. Residues 224-246 (VAFFCLDTACVMIFTVEYLLRLF) traverse the membrane as a helical segment. The Cytoplasmic portion of the chain corresponds to 247-253 (AAPSRYR). A helical membrane pass occupies residues 254-277 (FIRSVMSIIDVVAIMPYYIGLVMT). The Extracellular portion of the chain corresponds to 278-283 (NNEDVS). The chain crosses the membrane as a helical; Voltage-sensor span at residues 284-306 (GAFVTLRVFRVFRIFKFSRHSQG). At 307–318 (LRILGYTLKSCA) the chain is on the cytoplasmic side. Residues 319-343 (SELGFLLFSLTMAIIIFATVMFYAE) traverse the membrane as a helical segment. Residues 344-352 (KGSSASKFT) are Extracellular-facing. An intramembrane region (helical) is located at residues 353–366 (SIPASFWYTIVTMT). K(+) is bound by residues Thr367, Leu368, Gly369, and Tyr370. Positions 367 to 372 (TLGYGD) match the Selectivity filter motif. An intramembrane segment occupies 367-374 (TLGYGDMV). Residues 378–400 (IAGKIFGSICSLSGVLVIALPVP) traverse the membrane as a helical segment. The Cytoplasmic segment spans residues 401–655 (VIVSNFSRIY…TSNVVKVSVL (255 aa)). Phosphothreonine is present on Thr459. Positions 470 to 487 (SLIESQHHHLLHCLEKTT) are interaction with KCNIP1 and KCNIP2. A mediates dendritic targeting region spans residues 474–489 (SQHHHLLHCLEKTTGL). A disordered region spans residues 523 to 565 (SSMQNYPSTRSPSLSSHSGLTTTCCSRRSKKTTHLPNSNLPAT). Residues 529–548 (PSTRSPSLSSHSGLTTTCCS) show a composition bias toward low complexity. The residue at position 569 (Ser569) is a Phosphoserine; by CaMK2D. Ser585 carries the post-translational modification Phosphoserine. A disordered region spans residues 616–647 (SIPTPPALTPEGESRPPPASPGPNTNIPSITS). Residues 637–647 (GPNTNIPSITS) are compositionally biased toward polar residues.

Belongs to the potassium channel family. D (Shal) (TC 1.A.1.2) subfamily. Kv4.3/KCND3 sub-subfamily. Homotetramer. Heterotetramer with KCND2. Associates with the regulatory subunits KCNIP3 and KCNIP4. Interacts with KCNE1, KCNE2, SCN1B and KCNAB1 and DLG1. Component of heteromultimeric potassium channels. Identified in potassium channel complexes containing KCND1, KCND2, KCND3, KCNIP1, KCNIP2, KCNIP3, KCNIP4, DPP6 and DPP10. Interacts with KCNIP1; each KCNIP1 monomer interacts with two adjacent KCND3 subunits, through both the N-terminal inactivation ball of a KCND3 subunit and a C-terminal helix from the adjacent KCND3 subunit, clamping them together; this interaction stabilizes the tetrameric form and modulates the channel gating kinetics namely channel activation and inactivation kinetics and rate of recovery from inactivation. Interacts with DPP6; this interaction modulates the channel gating kinetics namely channel activation and inactivation kinetics and rate of recovery from inactivation. Interacts with KCNIP2; each KCNIP2 monomer interacts with two adjacent KCND3 subunits, through both the N-terminal inactivation ball of a KCND3 subunit and a C-terminal helix from the adjacent KCND3 subunit, clamping them together; this interaction modulates the channel gating kinetics. Regulated through phosphorylation at Ser-569 by CaMK2D. Highly expressed in brain, in particular in the retrosplenial cortex, medial habenula, anterior thalamus, hippocampus, cerebellum and lateral geniculate and superior colliculus. Highly expressed in heart atrium (at protein level) and throughout the ventricle wall, in lung and vas deferens.

It localises to the cell membrane. It is found in the sarcolemma. Its subcellular location is the cell projection. The protein localises to the dendrite. It catalyses the reaction K(+)(in) = K(+)(out). In terms of biological role, pore-forming (alpha) subunit of voltage-gated A-type potassium channels that mediates transmembrane potassium transport in excitable membranes, in brain and heart. In cardiomyocytes, may generate the transient outward potassium current I(To). In neurons, may conduct the transient subthreshold somatodendritic A-type potassium current (ISA). Kinetics properties are characterized by fast activation at subthreshold membrane potentials, rapid inactivation, and quick recovery from inactivation. Channel properties are modulated by interactions with regulatory subunits. Interaction with the regulatory subunits KCNIP1 or KCNIP2 modulates the channel gating kinetics namely channel activation and inactivation kinetics and rate of recovery from inactivation. Likewise, interaction with DPP6 modulates the channel gating kinetics namely channel activation and inactivation kinetics. This is A-type voltage-gated potassium channel KCND3 from Rattus norvegicus (Rat).